A 259-amino-acid chain; its full sequence is Phosphate import ATP-binding protein PstB 2 (259 aa).

The ABC transporter domain maps to 12-254; the sequence is ISARGLNVHY…PKEPLTQGYI (243 aa). 44–51 is a binding site for ATP; the sequence is GPSGCGKS.

This sequence belongs to the ABC transporter superfamily. Phosphate importer (TC 3.A.1.7) family. The complex is composed of two ATP-binding proteins (PstB), two transmembrane proteins (PstC and PstA) and a solute-binding protein (PstS).

It is found in the cell inner membrane. It carries out the reaction phosphate(out) + ATP + H2O = ADP + 2 phosphate(in) + H(+). Functionally, part of the ABC transporter complex PstSACB involved in phosphate import. Responsible for energy coupling to the transport system. This is Phosphate import ATP-binding protein PstB 2 from Paramagnetospirillum magneticum (strain ATCC 700264 / AMB-1) (Magnetospirillum magneticum).